We begin with the raw amino-acid sequence, 292 residues long: NAD kinase (292 aa).

Aspartate 74 serves as the catalytic Proton acceptor. NAD(+) is bound by residues 74–75, 147–148, aspartate 177, and 188–193; these read DG, NE, and TGYSLS.

The protein belongs to the NAD kinase family. Requires a divalent metal cation as cofactor.

It is found in the cytoplasm. It catalyses the reaction NAD(+) + ATP = ADP + NADP(+) + H(+). Functionally, involved in the regulation of the intracellular balance of NAD and NADP, and is a key enzyme in the biosynthesis of NADP. Catalyzes specifically the phosphorylation on 2'-hydroxyl of the adenosine moiety of NAD to yield NADP. In Cytophaga hutchinsonii (strain ATCC 33406 / DSM 1761 / CIP 103989 / NBRC 15051 / NCIMB 9469 / D465), this protein is NAD kinase.